The chain runs to 156 residues: Small ribosomal subunit protein uS7 (156 aa).

This sequence belongs to the universal ribosomal protein uS7 family. As to quaternary structure, part of the 30S ribosomal subunit. Contacts proteins S9 and S11.

In terms of biological role, one of the primary rRNA binding proteins, it binds directly to 16S rRNA where it nucleates assembly of the head domain of the 30S subunit. Is located at the subunit interface close to the decoding center, probably blocks exit of the E-site tRNA. This is Small ribosomal subunit protein uS7 from Bacillus cytotoxicus (strain DSM 22905 / CIP 110041 / 391-98 / NVH 391-98).